A 66-amino-acid polypeptide reads, in one-letter code: Photosystem II reaction center protein H (66 aa).

A helical membrane pass occupies residues 27 to 47; sequence GAVPIMTVIGLLLLVFLVILL.

The protein belongs to the PsbH family. As to quaternary structure, PSII is composed of 1 copy each of membrane proteins PsbA, PsbB, PsbC, PsbD, PsbE, PsbF, PsbH, PsbI, PsbJ, PsbK, PsbL, PsbM, PsbT, PsbX, PsbY, Psb30/Ycf12, peripheral proteins PsbO, CyanoQ (PsbQ), PsbU, PsbV and a large number of cofactors. It forms dimeric complexes.

Its subcellular location is the cellular thylakoid membrane. Functionally, one of the components of the core complex of photosystem II (PSII), required for its stability and/or assembly. PSII is a light-driven water:plastoquinone oxidoreductase that uses light energy to abstract electrons from H(2)O, generating O(2) and a proton gradient subsequently used for ATP formation. It consists of a core antenna complex that captures photons, and an electron transfer chain that converts photonic excitation into a charge separation. In Prochlorococcus marinus (strain MIT 9515), this protein is Photosystem II reaction center protein H.